Here is a 321-residue protein sequence, read N- to C-terminus: Ribose-phosphate pyrophosphokinase (321 aa).

Residues 44–46 (DGE) and 103–104 (RQ) contribute to the ATP site. Positions 137 and 179 each coordinate Mg(2+). Residue K202 is part of the active site. D-ribose 5-phosphate-binding positions include R204, D228, and 232–236 (DTAGT).

Belongs to the ribose-phosphate pyrophosphokinase family. Class I subfamily. As to quaternary structure, homohexamer. Mg(2+) serves as cofactor.

It localises to the cytoplasm. The enzyme catalyses D-ribose 5-phosphate + ATP = 5-phospho-alpha-D-ribose 1-diphosphate + AMP + H(+). It functions in the pathway metabolic intermediate biosynthesis; 5-phospho-alpha-D-ribose 1-diphosphate biosynthesis; 5-phospho-alpha-D-ribose 1-diphosphate from D-ribose 5-phosphate (route I): step 1/1. Its function is as follows. Involved in the biosynthesis of the central metabolite phospho-alpha-D-ribosyl-1-pyrophosphate (PRPP) via the transfer of pyrophosphoryl group from ATP to 1-hydroxyl of ribose-5-phosphate (Rib-5-P). The protein is Ribose-phosphate pyrophosphokinase of Staphylococcus haemolyticus (strain JCSC1435).